The chain runs to 251 residues: N-acetylmuramoyl-L-alanine amidase CwlA (251 aa).

The first 37 residues, 1–37 (MEIKQMLVPVSRYSVLCPYEMNPTEITFHNTYNDAPA), serve as a signal peptide directing secretion. The N-acetylmuramoyl-L-alanine amidase domain occupies 38–140 (INERNNVANN…QERNGKYCPH (103 aa)).

Belongs to the N-acetylmuramoyl-L-alanine amidase 2 family.

The protein resides in the secreted. The catalysed reaction is Hydrolyzes the link between N-acetylmuramoyl residues and L-amino acid residues in certain cell-wall glycopeptides.. Functionally, autolysins are involved in some important biological processes such as cell separation, cell-wall turnover, competence for genetic transformation, formation of the flagella and sporulation. This Bacillus sp protein is N-acetylmuramoyl-L-alanine amidase CwlA (cwlA).